A 115-amino-acid polypeptide reads, in one-letter code: Tyrosine-protein phosphatase 24 (115 aa).

The Tyrosine-protein phosphatase domain maps to 1-115; it reads WMMIVEQKCR…ETGSDAPMVV (115 aa). Position 83 (Asp-83) interacts with substrate.

This sequence belongs to the protein-tyrosine phosphatase family.

It carries out the reaction O-phospho-L-tyrosyl-[protein] + H2O = L-tyrosyl-[protein] + phosphate. The protein is Tyrosine-protein phosphatase 24 (STY-24) of Styela plicata (Wrinkled sea squirt).